The sequence spans 328 residues: dITP/XTP pyrophosphatase (328 aa).

Residues 1 to 129 (MSEKIYEYKD…ATSEQGFGDT (129 aa)) form a unknown region. An NTP pyrophosphatase region spans residues 130–324 (ILIATRNEGK…KLMEVFPAWQ (195 aa)). A substrate-binding site is contributed by 134-139 (TRNEGK). Asp-196 functions as the Proton acceptor in the catalytic mechanism. Residue Asp-196 coordinates Mg(2+). Residues Ser-197, 280-283 (FGYD), Lys-303, and 308-309 (HR) contribute to the substrate site.

It belongs to the HAM1 NTPase family. Homodimer. Mg(2+) serves as cofactor.

The catalysed reaction is XTP + H2O = XMP + diphosphate + H(+). It catalyses the reaction dITP + H2O = dIMP + diphosphate + H(+). The enzyme catalyses ITP + H2O = IMP + diphosphate + H(+). In terms of biological role, pyrophosphatase that catalyzes the hydrolysis of nucleoside triphosphates to their monophosphate derivatives, with a high preference for the non-canonical purine nucleotides XTP (xanthosine triphosphate), dITP (deoxyinosine triphosphate) and ITP. Seems to function as a house-cleaning enzyme that removes non-canonical purine nucleotides from the nucleotide pool, thus preventing their incorporation into DNA/RNA and avoiding chromosomal lesions. This is dITP/XTP pyrophosphatase from Streptococcus pyogenes serotype M18 (strain MGAS8232).